A 302-amino-acid chain; its full sequence is Nucleotide-binding protein STH186 (302 aa).

Residue 15-22 (GMSGAGKT) participates in ATP binding. 66-69 (DIRG) contributes to the GTP binding site.

It belongs to the RapZ-like family.

Displays ATPase and GTPase activities. The polypeptide is Nucleotide-binding protein STH186 (Symbiobacterium thermophilum (strain DSM 24528 / JCM 14929 / IAM 14863 / T)).